Consider the following 252-residue polypeptide: Type III pantothenate kinase (252 aa).

ATP is bound at residue 6–13; sequence DIGNTNIV. 107–110 serves as a coordination point for substrate; it reads GADL. The active-site Proton acceptor is aspartate 109. Position 129 (aspartate 129) interacts with K(+). Threonine 132 contributes to the ATP binding site. Threonine 184 lines the substrate pocket.

It belongs to the type III pantothenate kinase family. Homodimer. NH4(+) is required as a cofactor. K(+) serves as cofactor.

The protein resides in the cytoplasm. The catalysed reaction is (R)-pantothenate + ATP = (R)-4'-phosphopantothenate + ADP + H(+). It participates in cofactor biosynthesis; coenzyme A biosynthesis; CoA from (R)-pantothenate: step 1/5. Its function is as follows. Catalyzes the phosphorylation of pantothenate (Pan), the first step in CoA biosynthesis. The chain is Type III pantothenate kinase from Bifidobacterium animalis subsp. lactis (strain AD011).